A 547-amino-acid polypeptide reads, in one-letter code: Chaperonin GroEL (547 aa).

Residues 30-33, K51, 87-91, G415, 479-481, and D495 each bind ATP; these read TLGP, DGTTT, and NAA. The tract at residues 525 to 547 is disordered; that stretch reads PKEDKPDLGGGNPGGAGGMGGMM. The segment covering 532–547 has biased composition (gly residues); it reads LGGGNPGGAGGMGGMM.

The protein belongs to the chaperonin (HSP60) family. Forms a cylinder of 14 subunits composed of two heptameric rings stacked back-to-back. Interacts with the co-chaperonin GroES.

It is found in the cytoplasm. The catalysed reaction is ATP + H2O + a folded polypeptide = ADP + phosphate + an unfolded polypeptide.. In terms of biological role, together with its co-chaperonin GroES, plays an essential role in assisting protein folding. The GroEL-GroES system forms a nano-cage that allows encapsulation of the non-native substrate proteins and provides a physical environment optimized to promote and accelerate protein folding. This Blochmanniella floridana protein is Chaperonin GroEL.